A 320-amino-acid chain; its full sequence is Cytochrome f (320 aa).

An N-terminal signal peptide occupies residues 1–35 (MQNRNFNNLIIKWAIRLISIMIIINTIFWSSISEA). The heme site is built by phenylalanine 36, cysteine 56, cysteine 59, and histidine 60. A helical transmembrane segment spans residues 286–305 (IQGLLLFFGSVILAQIFLVL).

Belongs to the cytochrome f family. As to quaternary structure, the 4 large subunits of the cytochrome b6-f complex are cytochrome b6, subunit IV (17 kDa polypeptide, petD), cytochrome f and the Rieske protein, while the 4 small subunits are PetG, PetL, PetM and PetN. The complex functions as a dimer. Heme serves as cofactor.

It is found in the plastid. Its subcellular location is the chloroplast thylakoid membrane. Component of the cytochrome b6-f complex, which mediates electron transfer between photosystem II (PSII) and photosystem I (PSI), cyclic electron flow around PSI, and state transitions. The polypeptide is Cytochrome f (petA) (Marchantia polymorpha (Common liverwort)).